We begin with the raw amino-acid sequence, 255 residues long: MLGNHLFFIPVLPLFALFSLILKNSWKDILEKAVDPIAICAYGFTIKMALIAALFNSIFGFLITWVITRYEFKGKKFIDAAVDLPFALPTSVAGLTLATVYGNQGWVGRFLKMGNLQIIYTKFGVLLAMIFVSFPFVIRSLQPVLQGLDHGLEEAAWCLGASSFQTFLRVIFPTLVPALVTGFTLSFSRALGEFGSVVMISSNLPLDDLVTSVLIYQSLEQYDYFGASVIGAVILMIALLIIFLINTAQAFYSRR.

A run of 7 helical transmembrane segments spans residues 2–22 (LGNHLFFIPVLPLFALFSLIL), 48–68 (MALIAALFNSIFGFLITWVIT), 77–97 (FIDAAVDLPFALPTSVAGLTL), 118–138 (IIYTKFGVLLAMIFVSFPFVI), 167–187 (FLRVIFPTLVPALVTGFTLSF), 195–215 (GSVVMISSNLPLDDLVTSVLI), and 225–245 (FGASVIGAVILMIALLIIFLI). The ABC transmembrane type-1 domain maps to 42-246 (YGFTIKMALI…IALLIIFLIN (205 aa)).

Belongs to the binding-protein-dependent transport system permease family. CysTW subfamily.

It localises to the plastid membrane. Functionally, part of the ABC transporter complex cysAWTP (TC 3.A.1.6.1) involved in sulfate/thiosulfate import. Probably responsible for the translocation of the substrate across the membrane. The chain is Probable sulfate transport system permease protein cysT (cysT) from Prototheca wickerhamii.